The chain runs to 305 residues: Methionyl-tRNA formyltransferase (305 aa).

109 to 112 is a (6S)-5,6,7,8-tetrahydrofolate binding site; the sequence is SLLP.

The protein belongs to the Fmt family.

The enzyme catalyses L-methionyl-tRNA(fMet) + (6R)-10-formyltetrahydrofolate = N-formyl-L-methionyl-tRNA(fMet) + (6S)-5,6,7,8-tetrahydrofolate + H(+). In terms of biological role, attaches a formyl group to the free amino group of methionyl-tRNA(fMet). The formyl group appears to play a dual role in the initiator identity of N-formylmethionyl-tRNA by promoting its recognition by IF2 and preventing the misappropriation of this tRNA by the elongation apparatus. The chain is Methionyl-tRNA formyltransferase from Roseobacter denitrificans (strain ATCC 33942 / OCh 114) (Erythrobacter sp. (strain OCh 114)).